The sequence spans 157 residues: S-ribosylhomocysteine lyase (157 aa).

Fe cation is bound by residues H54, H58, and C126.

It belongs to the LuxS family. Homodimer. Requires Fe cation as cofactor.

The catalysed reaction is S-(5-deoxy-D-ribos-5-yl)-L-homocysteine = (S)-4,5-dihydroxypentane-2,3-dione + L-homocysteine. Functionally, involved in the synthesis of autoinducer 2 (AI-2) which is secreted by bacteria and is used to communicate both the cell density and the metabolic potential of the environment. The regulation of gene expression in response to changes in cell density is called quorum sensing. Catalyzes the transformation of S-ribosylhomocysteine (RHC) to homocysteine (HC) and 4,5-dihydroxy-2,3-pentadione (DPD). This chain is S-ribosylhomocysteine lyase, found in Bacillus cytotoxicus (strain DSM 22905 / CIP 110041 / 391-98 / NVH 391-98).